Reading from the N-terminus, the 776-residue chain is MNAESRIHALRAELDQHNYRYYVLDEPSVPDAEYDRLFNELKALEAEHPHLVTPDSPTQRVGGAALAAFSQVRHEVPMLSLGNAFEEADLREFGRRVVDGLDQPGAVDYSCEPKLDGLAVSLLYRDGQLVQGATRGDGTTGEDISANVRTVRNIPLKLQGKGWPAVLEVRGEVFMSKAGFDRLNAAQAEAGGKTFANPRNAAAGSLRQLDSKITASRPLEFCCYGVGQVSASIGESHIGILEQLKAWGLPISRELRHAAGIEECLAYYRDIGERRNSLPYEIDGVVFKVNSLASQRELGFRAREPRWAIAHKFPAMEELTEVLDVEFQVGRTGAVTPVARLKPVKVAGVTVSNATLHNMDEIARLGLRIGDTVIIRRAGDVIPQVMQVVLERRPEDARPVQVPSACPVCGSQVERTQLVKRSKGKETTSEGAVYRCVGRLACGAQLKQAIIHYVSRRAMDIDGLGEKSVEQLVDEGLIGSPADLYKLQFDQIVGLEGFAEVSSKKLLDAIEASKRPSLARFIYALGIPDVGEETAKVLARSLGSLARVQQALPQVLTYLPDIGLEVAYEIHNFFEDEHNCKVIEQLLGCGMQLQDEGELAAEFAASTTLAGMIAKLDIASVGPTGAEKLVAKLDSLDKIIAADGIDLRQALAAKQAEAVREFFKDEANQKLARDIEAQLLAFGMHWNSEKKVAEGLPLAGQTWVLTGTLERMSRDIAKEKLESLGAKVAGSVSGKTHCVVAGPGAGSKLAKASELGVKVLDEDAFVVFLDEQGIAI.

NAD(+) is bound by residues 31-35 (DAEYD), 80-81 (SL), and Glu112. Lys114 serves as the catalytic N6-AMP-lysine intermediate. Arg135, Glu172, Lys288, and Lys312 together coordinate NAD(+). The Zn(2+) site is built by Cys406, Cys409, Cys436, and Cys442. The BRCT domain maps to 693–776 (AEGLPLAGQT…VFLDEQGIAI (84 aa)).

It belongs to the NAD-dependent DNA ligase family. LigA subfamily. Requires Mg(2+) as cofactor. Mn(2+) is required as a cofactor.

The enzyme catalyses NAD(+) + (deoxyribonucleotide)n-3'-hydroxyl + 5'-phospho-(deoxyribonucleotide)m = (deoxyribonucleotide)n+m + AMP + beta-nicotinamide D-nucleotide.. Functionally, DNA ligase that catalyzes the formation of phosphodiester linkages between 5'-phosphoryl and 3'-hydroxyl groups in double-stranded DNA using NAD as a coenzyme and as the energy source for the reaction. It is essential for DNA replication and repair of damaged DNA. This chain is DNA ligase, found in Pseudomonas putida (strain W619).